Consider the following 1029-residue polypeptide: Putative B3 domain-containing protein Os03g0621600 (1029 aa).

3 DNA-binding regions (TF-B3) span residues 147-240 (DTYF…FDPS), 339-430 (VAVM…RKMK), and 450-543 (EKYF…FDPS). The disordered stretch occupies residues 572–605 (TSYHDQPKGNKHWMQKDSSSKGNKIGNTRSSNTP). Residues 591–605 (SKGNKIGNTRSSNTP) are compositionally biased toward polar residues. A DNA-binding region (TF-B3 4) is located at residues 731 to 824 (YKNFFKVMIG…KLKVLIFGPS (94 aa)). A compositionally biased stretch (polar residues) spans 852 to 867 (SSNSHDLPVKSPQNVS). Residues 852-882 (SSNSHDLPVKSPQNVSKSEKQWDSSEQENDT) form a disordered region. Residues 934–1029 (GCILRKSRVH…SMNVHIIPKK (96 aa)) constitute a DNA-binding region (TF-B3 5).

Its subcellular location is the nucleus. This chain is Putative B3 domain-containing protein Os03g0621600, found in Oryza sativa subsp. japonica (Rice).